A 459-amino-acid chain; its full sequence is Jacalin-related lectin 12 (459 aa).

3 Jacalin-type lectin domains span residues 2–148 (SQDS…YFTP), 151–296 (PTRM…YITT), and 298–443 (TLTK…YSFP).

It belongs to the jacalin lectin family.

The sequence is that of Jacalin-related lectin 12 (JAL12) from Arabidopsis thaliana (Mouse-ear cress).